We begin with the raw amino-acid sequence, 443 residues long: KH domain-containing, RNA-binding, signal transduction-associated protein 1 (443 aa).

Positions 1-94 (MQRRDDPASR…PLLPPSATAA (94 aa)) are disordered. A phosphoserine mark is found at Ser18 and Ser20. Residue Lys21 is modified to N6-acetyllysine. Phosphoserine is present on Ser29. A Phosphothreonine modification is found at Thr33. Arg45 and Arg52 each carry asymmetric dimethylarginine; by PRMT1. A Phosphoserine; by MAPK1 modification is found at Ser58. Pro residues predominate over residues 61–72 (TQPPPLLPPSTP). Thr71 and Thr84 each carry phosphothreonine; by MAPK1. Residues 81–94 (SAPTPLLPPSATAA) show a composition bias toward low complexity. Residues Lys96 and Lys102 each participate in a glycyl lysine isopeptide (Lys-Gly) (interchain with G-Cter in SUMO2) cross-link. Residues 100–260 (ENKYLPELMA…VKKFLVPDMM (161 aa)) are involved in homodimerization. Ser113 bears the Phosphoserine mark. Residue Lys139 forms a Glycyl lysine isopeptide (Lys-Gly) (interchain with G-Cter in SUMO2) linkage. Ser150 bears the Phosphoserine mark. In terms of domain architecture, KH spans 171 to 197 (NFVGKILGPQGNTIKRLQEETGAKISV). Lys175 carries the post-translational modification N6-acetyllysine; alternate. Lys175 participates in a covalent cross-link: Glycyl lysine isopeptide (Lys-Gly) (interchain with G-Cter in SUMO2); alternate. Thr183 carries the post-translational modification Phosphothreonine. Positions 280-317 (PSRGRGVSVRGRGAAPPPPPVPRGRGVGPPRGALVRGT) are disordered. An omega-N-methylarginine mark is found at Arg282, Arg284, and Arg291. Over residues 283–293 (GRGVSVRGRGA) the composition is skewed to low complexity. Asymmetric dimethylarginine is present on Arg304. Residues 307–316 (GPPRGALVRG) are compositionally biased toward low complexity. 2 positions are modified to omega-N-methylarginine; by PRMT1: Arg310 and Arg315. Dimethylated arginine; alternate is present on Arg320. Omega-N-methylarginine; by PRMT1; alternate is present on Arg320. Omega-N-methylarginine; by PRMT1 is present on Arg325. Positions 326–345 (GATVTRGVPPPPTVRGAPTP) are disordered. Dimethylated arginine; alternate is present on residues Arg331 and Arg340. 2 positions are modified to omega-N-methylarginine; by PRMT1; alternate: Arg331 and Arg340. Arg331 is modified (asymmetric dimethylarginine; alternate). The interval 351 to 443 (GIQRIPLPPT…AYREHPYGRY (93 aa)) is interaction with HNRNPA1. Residue Tyr387 is modified to Phosphotyrosine. At Ser390 the chain carries Phosphoserine. Residues 400-420 (GHGELQDSYEAYGQDDWNGTR) form an interaction with ZBTB7A region. The tract at residues 411–443 (YGQDDWNGTRPSLKAPPARPVKGAYREHPYGRY) is disordered. Lys432 participates in a covalent cross-link: Glycyl lysine isopeptide (Lys-Gly) (interchain with G-Cter in SUMO2). The span at 434-443 (AYREHPYGRY) shows a compositional bias: basic and acidic residues. A phosphotyrosine; by PTK6 mark is found at Tyr435, Tyr440, and Tyr443.

It belongs to the KHDRBS family. As to quaternary structure, self-associates to form homooligomers when bound to RNA, oligomerization appears to be limited when binding to proteins. Forms a trimeric complex in the nucleus consisting of BANP, HDAC6 and KHDRBS1/SAM68; HDAC6 keeps KHDRBS1 in a deacetylated state which inhibits the inclusion of CD44 alternate exons. The complex is disrupted by MAPK1/MAPK3-mediated phosphorylation of BANP which results in BANP export to the cytoplasm. This facilitates acetylation of KHDRBS1 and CD44 variant exon inclusion. Interacts with KHDRBS3/SLIM-2 and KHDRBS2/SLIM-1; heterooligomer formation of KHDRBS family proteins may modulate RNA substrate specificity. Interacts with RASA1, FYN, GRB2, PLCG1, SRC, CBP and PRMT1. Interacts with PTK6 (via SH3 and SH2 domains). Forms a complex with ILF2, ILF3, YLPM1, RBMX, NCOA5 and PPP1CA. Binds WBP4/FBP21 (via WW domains), FNBP4/FBP30 (via WW domains). Interacts (via Arg/Gly-rich-flanked Pro-rich regions) with FYN (via the SH3 domain). Interacts with APC, HNRNPA1. Interacts with the non-receptor tyrosine kinase SRMS; the interaction leads to phosphorylation of KHDRBS1. Interacts with ZBTB7A; negatively regulates KHDRBS1 splicing activity toward BCL2L1. Tyrosine phosphorylated by several non-receptor tyrosine kinases including LCK, FYN and JAK3. Also tyrosine phosphorylated by the non-receptor tyrosine kinase SRMS in an EGF-dependent manner. Phosphorylation by PTK6 negatively regulates its RNA binding ability. Phosphorylation by PTK6 at Tyr-440 dictates the nuclear localization of KHDRBS1. Phosphorylation by MAPK1 at Ser-58, Thr-71 and Thr-84 regulates CD44 alternative splicing by promoting CD44 exon v5 inclusion. In terms of processing, acetylated. Positively correlates with ability to bind RNA. Deacetylated by HDAC6; this regulates alternative splicing by inhibiting the inclusion of CD44 alternate exons. Post-translationally, arginine methylation is required for nuclear localization. Inhibits interaction with Src-like SH3 domains, but not interaction with WW domains of WBP4/FBP21 and FNBP4/FBP30. In terms of tissue distribution, in adult cerebellum expressed in most neuronal cell populations, specifically in cerebellar granule cells of the internal granular layer, ROR(alpha)-positive Purkinje cells, internal granular layer and molecular layer interneurons (at protein level).

Its subcellular location is the nucleus. The protein localises to the cytoplasm. It is found in the membrane. In terms of biological role, recruited and tyrosine phosphorylated by several receptor systems, for example the T-cell, leptin and insulin receptors. Once phosphorylated, functions as an adapter protein in signal transduction cascades by binding to SH2 and SH3 domain-containing proteins. Role in G2-M progression in the cell cycle. Represses CBP-dependent transcriptional activation apparently by competing with other nuclear factors for binding to CBP. Also acts as a putative regulator of mRNA stability and/or translation rates and mediates mRNA nuclear export. Positively regulates the association of constitutive transport element (CTE)-containing mRNA with large polyribosomes and translation initiation. May not be involved in the nucleocytoplasmic export of unspliced (CTE)-containing RNA species. RNA-binding protein that plays a role in the regulation of alternative splicing and influences mRNA splice site selection and exon inclusion. Binds to RNA containing 5'-[AU]UAA-3' as a bipartite motif spaced by more than 15 nucleotides. Binds poly(A). In cooperation with HNRNPA1 modulates alternative splicing of BCL2L1 by promoting splicing toward isoform Bcl-X(S), and of SMN1. Can regulate CD44 alternative splicing in a Ras pathway-dependent manner. Can regulate alternative splicing of NRXN1 and NRXN3 in the laminin G-like domain 6 containing the evolutionary conserved neurexin alternative spliced segment 4 (AS4) involved in neurexin selective targeting to postsynaptic partners. In a neuronal activity-dependent manner cooperates synergistically with KHDRBS2/SLIM-1 in regulation of NRXN1 exon skipping at AS4. The cooperation with KHDRBS2/SLIM-1 is antagonistic for regulation of NXRN3 alternative splicing at AS4. This Mus musculus (Mouse) protein is KH domain-containing, RNA-binding, signal transduction-associated protein 1.